A 233-amino-acid chain; its full sequence is AA9 family lytic polysaccharide monooxygenase A (233 aa).

An N-terminal signal peptide occupies residues 1-17 (MKLTTSVALLAAAGAQA). Cu(2+) is bound by residues His-18 and His-90. Intrachain disulfides connect Cys-59-Cys-180 and Cys-150-Cys-233. Asn-132 is a glycosylation site (N-linked (GlcNAc...) asparagine). His-166 and Gln-175 together coordinate O2. Tyr-177 is a binding site for Cu(2+).

This sequence belongs to the polysaccharide monooxygenase AA9 family. Cu(2+) is required as a cofactor.

Its subcellular location is the secreted. It catalyses the reaction [(1-&gt;4)-beta-D-glucosyl]n+m + reduced acceptor + O2 = 4-dehydro-beta-D-glucosyl-[(1-&gt;4)-beta-D-glucosyl]n-1 + [(1-&gt;4)-beta-D-glucosyl]m + acceptor + H2O.. Its function is as follows. Lytic polysaccharide monooxygenase (LPMO) that depolymerizes crystalline and amorphous polysaccharides via the oxidation of scissile alpha- or beta-(1-4)-glycosidic bonds, yielding C1 and C4 oxidation products. Catalysis by LPMOs requires the reduction of the active-site copper from Cu(II) to Cu(I) by a reducing agent and H(2)O(2) or O(2) as a cosubstrate. Shows endoglucanase activity on tamarind xyloglucan, as well as on beechwood xylan when combined with phosphoric acid swollen cellulose (PASC). Shows no activity on wheat arabinoxylan, konjac glucomannan, acetylated spruce galactoglucomannan, or cellopentaose. The protein is AA9 family lytic polysaccharide monooxygenase A of Thermothielavioides terrestris (strain ATCC 38088 / NRRL 8126) (Thielavia terrestris).